The following is a 341-amino-acid chain: Solute carrier family 25 member 43 (341 aa).

3 Solcar repeats span residues 11–101 (TGSQ…MDDL), 105–185 (SQWS…LLVY), and 200–298 (SHLQ…LYQN). A run of 6 helical transmembrane segments spans residues 16–36 (LLCA…LELA), 68–88 (LWKG…VQLA), 110–130 (IVTG…TDLI), 166–186 (GVSL…LVYM), 205–225 (FANV…FDTV), and 262–282 (VLGL…YFGV).

It belongs to the mitochondrial carrier (TC 2.A.29) family.

Its subcellular location is the mitochondrion inner membrane. This is Solute carrier family 25 member 43 (Slc25a43) from Mus musculus (Mouse).